A 308-amino-acid chain; its full sequence is Aspartate carbamoyltransferase catalytic subunit (308 aa).

Arg55 and Thr56 together coordinate carbamoyl phosphate. Lys85 is an L-aspartate binding site. The carbamoyl phosphate site is built by Arg106, His135, and Gln138. Residues Arg168 and Arg229 each coordinate L-aspartate. Positions 267 and 268 each coordinate carbamoyl phosphate.

The protein belongs to the aspartate/ornithine carbamoyltransferase superfamily. ATCase family. In terms of assembly, heterododecamer (2C3:3R2) of six catalytic PyrB chains organized as two trimers (C3), and six regulatory PyrI chains organized as three dimers (R2).

The catalysed reaction is carbamoyl phosphate + L-aspartate = N-carbamoyl-L-aspartate + phosphate + H(+). The protein operates within pyrimidine metabolism; UMP biosynthesis via de novo pathway; (S)-dihydroorotate from bicarbonate: step 2/3. Functionally, catalyzes the condensation of carbamoyl phosphate and aspartate to form carbamoyl aspartate and inorganic phosphate, the committed step in the de novo pyrimidine nucleotide biosynthesis pathway. The polypeptide is Aspartate carbamoyltransferase catalytic subunit (Laribacter hongkongensis (strain HLHK9)).